The following is a 66-amino-acid chain: Large ribosomal subunit protein bL35 (66 aa).

Residues 20 to 40 (GKVKHAQRGKRHGMIKRTKKQ) are disordered.

It belongs to the bacterial ribosomal protein bL35 family.

This Nitrobacter winogradskyi (strain ATCC 25391 / DSM 10237 / CIP 104748 / NCIMB 11846 / Nb-255) protein is Large ribosomal subunit protein bL35.